The primary structure comprises 212 residues: Uracil phosphoribosyltransferase (212 aa).

Residues R78, R103, and 130-138 (DPMLATGSS) contribute to the 5-phospho-alpha-D-ribose 1-diphosphate site. Residues I193 and 198–200 (GDA) each bind uracil. D199 lines the 5-phospho-alpha-D-ribose 1-diphosphate pocket.

It belongs to the UPRTase family. It depends on Mg(2+) as a cofactor.

The enzyme catalyses UMP + diphosphate = 5-phospho-alpha-D-ribose 1-diphosphate + uracil. It participates in pyrimidine metabolism; UMP biosynthesis via salvage pathway; UMP from uracil: step 1/1. Allosterically activated by GTP. Its function is as follows. Catalyzes the conversion of uracil and 5-phospho-alpha-D-ribose 1-diphosphate (PRPP) to UMP and diphosphate. The protein is Uracil phosphoribosyltransferase of Pseudomonas syringae pv. tomato (strain ATCC BAA-871 / DC3000).